A 189-amino-acid chain; its full sequence is Der GTPase-activating protein YihI (189 aa).

Positions 1-81 (MARKKKTRRV…ALAKKDPRLG (81 aa)) are disordered. Composition is skewed to basic and acidic residues over residues 9 to 27 (RVSD…ELPK) and 35 to 46 (TRYELDAKARED). The segment covering 60–71 (RHSATENNNNHQ) has biased composition (polar residues).

Belongs to the YihI family. In terms of assembly, interacts with Der.

In terms of biological role, a GTPase-activating protein (GAP) that modifies Der/EngA GTPase function. May play a role in ribosome biogenesis. The polypeptide is Der GTPase-activating protein YihI (Pasteurella multocida (strain Pm70)).